A 237-amino-acid polypeptide reads, in one-letter code: Mitochondrial inner membrane protease atp23 (237 aa).

The segment covering 1–18 (MSTSESSNNGSQPGNQDT) has biased composition (polar residues). Positions 1–24 (MSTSESSNNGSQPGNQDTGYIPGD) are disordered. An a divalent metal cation-binding site is contributed by histidine 136. Glutamate 137 is a catalytic residue. Histidine 140 contributes to the a divalent metal cation binding site.

It belongs to the peptidase M76 family.

It is found in the mitochondrion inner membrane. Has a dual role in the assembly of mitochondrial ATPase. Acts as a protease that removes N-terminal residues of mitochondrial ATPase CF(0) subunit 6 at the intermembrane space side. Also involved in the correct assembly of the membrane-embedded ATPase CF(0) particle, probably mediating association of subunit 6 with the subunit 9 ring. In Aspergillus niger (strain ATCC MYA-4892 / CBS 513.88 / FGSC A1513), this protein is Mitochondrial inner membrane protease atp23 (atp23).